The following is a 227-amino-acid chain: Ribonuclease S-5 (227 aa).

An N-terminal signal peptide occupies residues 1–27 (MGITGMVYVVTMVFLLIVLILSSSTVG). RNA is bound at residue glutamine 36. Cysteine 42 and cysteine 49 form a disulfide bridge. A glycan (N-linked (GlcNAc...) asparagine) is linked at asparagine 45. RNA-binding positions include histidine 60, 97–98 (NV), phenylalanine 107, 110–111 (KE), and 114–115 (KH). Histidine 60 functions as the Proton donor in the catalytic mechanism. Cysteine 75 and cysteine 118 form a disulfide bridge. Residue glutamate 111 is part of the active site. The Proton acceptor role is filled by histidine 115. N-linked (GlcNAc...) asparagine glycosylation is present at asparagine 143. Cystine bridges form between cysteine 182-cysteine 220 and cysteine 197-cysteine 208.

This sequence belongs to the RNase T2 family. In terms of processing, N-glycan at Asn-45 consists of disaccharide (GlcNAc-GlcNAc). N-linked core structure at Asn-143 contains xylose.

It carries out the reaction a ribonucleotidyl-ribonucleotide-RNA + H2O = a 3'-end 3'-phospho-ribonucleotide-RNA + a 5'-end dephospho-ribonucleoside-RNA + H(+). Self-incompatibility (SI) is the inherited ability of a flowering plant to prevent self-fertilization by discriminating between self and non-self pollen during pollination. In many species, self-incompatibility is controlled by the single, multiallelic locus S. In Pyrus pyrifolia (Chinese pear), this protein is Ribonuclease S-5.